The sequence spans 346 residues: Inositol 2-dehydrogenase/D-chiro-inositol 3-dehydrogenase (346 aa).

This sequence belongs to the Gfo/Idh/MocA family. Homotetramer.

It carries out the reaction myo-inositol + NAD(+) = scyllo-inosose + NADH + H(+). The catalysed reaction is 1D-chiro-inositol + NAD(+) = scyllo-inosine + NADH + H(+). It functions in the pathway polyol metabolism; myo-inositol degradation into acetyl-CoA; acetyl-CoA from myo-inositol: step 1/7. Functionally, involved in the oxidation of myo-inositol (MI) and D-chiro-inositol (DCI) to 2-keto-myo-inositol (2KMI or 2-inosose) and 1-keto-D-chiro-inositol (1KDCI), respectively. This is Inositol 2-dehydrogenase/D-chiro-inositol 3-dehydrogenase from Lacticaseibacillus casei (Lactobacillus casei).